A 272-amino-acid polypeptide reads, in one-letter code: MTTPMKIAITGVSGRMGRMLVDTIDTSDAVTLSAALERPGHDWIGRDLGLALGGTERGVLVSDDIDSALADSEAVIDFTSPAATIRFAQAAARVGAIHVIGTTGMTEQEIAQIDAQAAGAVIVRAGNMSLGVNLLVQLTKRVAAALDEDFDIEVIESHHNQKVDAPSGTALMLGEAAAEGRGVSLDAVSDRGRDGLTGARQKGDIGFVSVRGGDIVGEHDVLFAAQGERITLRHVASDRSVFARGALKAALWARHRAPGAYDMLDVLGLKDG.

NAD(+) is bound by residues 11–16 (GVSGRM) and glutamate 37. Arginine 38 serves as a coordination point for NADP(+). NAD(+) contacts are provided by residues 101-103 (GTT) and 125-128 (AGNM). The Proton donor/acceptor role is filled by histidine 158. Position 159 (histidine 159) interacts with (S)-2,3,4,5-tetrahydrodipicolinate. Lysine 162 (proton donor) is an active-site residue. Residue 168 to 169 (GT) participates in (S)-2,3,4,5-tetrahydrodipicolinate binding.

It belongs to the DapB family.

The protein resides in the cytoplasm. It carries out the reaction (S)-2,3,4,5-tetrahydrodipicolinate + NAD(+) + H2O = (2S,4S)-4-hydroxy-2,3,4,5-tetrahydrodipicolinate + NADH + H(+). It catalyses the reaction (S)-2,3,4,5-tetrahydrodipicolinate + NADP(+) + H2O = (2S,4S)-4-hydroxy-2,3,4,5-tetrahydrodipicolinate + NADPH + H(+). It functions in the pathway amino-acid biosynthesis; L-lysine biosynthesis via DAP pathway; (S)-tetrahydrodipicolinate from L-aspartate: step 4/4. Catalyzes the conversion of 4-hydroxy-tetrahydrodipicolinate (HTPA) to tetrahydrodipicolinate. The protein is 4-hydroxy-tetrahydrodipicolinate reductase of Roseobacter denitrificans (strain ATCC 33942 / OCh 114) (Erythrobacter sp. (strain OCh 114)).